The following is a 312-amino-acid chain: Ribosomal RNA small subunit methyltransferase H (312 aa).

S-adenosyl-L-methionine is bound by residues 35-37 (GGH), aspartate 55, phenylalanine 79, aspartate 101, and glutamine 108.

The protein belongs to the methyltransferase superfamily. RsmH family.

Its subcellular location is the cytoplasm. It carries out the reaction cytidine(1402) in 16S rRNA + S-adenosyl-L-methionine = N(4)-methylcytidine(1402) in 16S rRNA + S-adenosyl-L-homocysteine + H(+). Specifically methylates the N4 position of cytidine in position 1402 (C1402) of 16S rRNA. In Buchnera aphidicola subsp. Schizaphis graminum (strain Sg), this protein is Ribosomal RNA small subunit methyltransferase H.